The primary structure comprises 132 residues: Large ribosomal subunit protein uL14 (132 aa).

The protein belongs to the universal ribosomal protein uL14 family. In terms of assembly, part of the 50S ribosomal subunit. Forms a cluster with proteins L3 and L24e, part of which may contact the 16S rRNA in 2 intersubunit bridges.

Its function is as follows. Binds to 23S rRNA. Forms part of two intersubunit bridges in the 70S ribosome. The polypeptide is Large ribosomal subunit protein uL14 (Methanococcus vannielii).